The chain runs to 432 residues: D-amino acid dehydrogenase (432 aa).

FAD is bound at residue 3–17 (VVILGSGVVGVASAW).

The protein belongs to the DadA oxidoreductase family. The cofactor is FAD.

The catalysed reaction is a D-alpha-amino acid + A + H2O = a 2-oxocarboxylate + AH2 + NH4(+). The protein operates within amino-acid degradation; D-alanine degradation; NH(3) and pyruvate from D-alanine: step 1/1. Functionally, oxidative deamination of D-amino acids. The polypeptide is D-amino acid dehydrogenase (Shigella boydii serotype 18 (strain CDC 3083-94 / BS512)).